The sequence spans 213 residues: Serine acetyltransferase (213 aa).

It belongs to the transferase hexapeptide repeat family.

The protein resides in the cytoplasm. It catalyses the reaction L-serine + acetyl-CoA = O-acetyl-L-serine + CoA. It participates in amino-acid biosynthesis; L-cysteine biosynthesis; L-cysteine from L-serine: step 1/2. The sequence is that of Serine acetyltransferase (cysE) from Staphylococcus epidermidis (strain ATCC 35984 / DSM 28319 / BCRC 17069 / CCUG 31568 / BM 3577 / RP62A).